A 503-amino-acid polypeptide reads, in one-letter code: Probable cytosol aminopeptidase (503 aa).

Residues K274 and D279 each coordinate Mn(2+). Residue K286 is part of the active site. Mn(2+) contacts are provided by D297, D356, and E358. Residue R360 is part of the active site.

Belongs to the peptidase M17 family. Mn(2+) serves as cofactor.

The protein resides in the cytoplasm. It carries out the reaction Release of an N-terminal amino acid, Xaa-|-Yaa-, in which Xaa is preferably Leu, but may be other amino acids including Pro although not Arg or Lys, and Yaa may be Pro. Amino acid amides and methyl esters are also readily hydrolyzed, but rates on arylamides are exceedingly low.. The enzyme catalyses Release of an N-terminal amino acid, preferentially leucine, but not glutamic or aspartic acids.. Its function is as follows. Presumably involved in the processing and regular turnover of intracellular proteins. Catalyzes the removal of unsubstituted N-terminal amino acids from various peptides. This Burkholderia multivorans (strain ATCC 17616 / 249) protein is Probable cytosol aminopeptidase.